We begin with the raw amino-acid sequence, 41 residues long: U-megalopygitoxin(11)-Mo28 (41 aa).

Positions 1-29 (MRTTLLLLIIAITVMVFVSEAYAAPAPEP) are cleaved as a signal peptide.

The protein belongs to the caterpillar 11 family. As to expression, expressed by the venom apparatus.

Its subcellular location is the secreted. Probable toxin. In Megalopyge opercularis (Southern flannel moth), this protein is U-megalopygitoxin(11)-Mo28.